The chain runs to 179 residues: Large ribosomal subunit protein uL5 (179 aa).

This sequence belongs to the universal ribosomal protein uL5 family. Part of the 50S ribosomal subunit; part of the 5S rRNA/L5/L18/L25 subcomplex. Contacts the 5S rRNA and the P site tRNA. Forms a bridge to the 30S subunit in the 70S ribosome.

In terms of biological role, this is one of the proteins that bind and probably mediate the attachment of the 5S RNA into the large ribosomal subunit, where it forms part of the central protuberance. In the 70S ribosome it contacts protein S13 of the 30S subunit (bridge B1b), connecting the 2 subunits; this bridge is implicated in subunit movement. Contacts the P site tRNA; the 5S rRNA and some of its associated proteins might help stabilize positioning of ribosome-bound tRNAs. This chain is Large ribosomal subunit protein uL5, found in Cronobacter sakazakii (strain ATCC BAA-894) (Enterobacter sakazakii).